Consider the following 245-residue polypeptide: Probable septum site-determining protein MinC (245 aa).

The segment covering A112–P132 has biased composition (basic and acidic residues). Residues A112–R140 form a disordered region.

It belongs to the MinC family. As to quaternary structure, interacts with MinD and FtsZ.

Its function is as follows. Cell division inhibitor that blocks the formation of polar Z ring septums. Rapidly oscillates between the poles of the cell to destabilize FtsZ filaments that have formed before they mature into polar Z rings. Prevents FtsZ polymerization. The sequence is that of Probable septum site-determining protein MinC from Pseudomonas fluorescens (strain Pf0-1).